We begin with the raw amino-acid sequence, 439 residues long: Thymidine phosphorylase (439 aa).

Belongs to the thymidine/pyrimidine-nucleoside phosphorylase family. Homodimer.

It carries out the reaction thymidine + phosphate = 2-deoxy-alpha-D-ribose 1-phosphate + thymine. Its pathway is pyrimidine metabolism; dTMP biosynthesis via salvage pathway; dTMP from thymine: step 1/2. The enzymes which catalyze the reversible phosphorolysis of pyrimidine nucleosides are involved in the degradation of these compounds and in their utilization as carbon and energy sources, or in the rescue of pyrimidine bases for nucleotide synthesis. The polypeptide is Thymidine phosphorylase (Mesorhizobium japonicum (strain LMG 29417 / CECT 9101 / MAFF 303099) (Mesorhizobium loti (strain MAFF 303099))).